The sequence spans 195 residues: Adenylate kinase (195 aa).

An ATP-binding site is contributed by 8 to 16 (GIPGVGKTT).

The protein belongs to the archaeal adenylate kinase family.

Its subcellular location is the cytoplasm. The enzyme catalyses AMP + ATP = 2 ADP. The sequence is that of Adenylate kinase from Saccharolobus islandicus (strain M.14.25 / Kamchatka #1) (Sulfolobus islandicus).